Here is a 220-residue protein sequence, read N- to C-terminus: Small ribosomal subunit protein uS3 (220 aa).

One can recognise a KH type-2 domain in the interval 38-106; the sequence is IRNFINKKLQ…QVHINIVEIK (69 aa).

It belongs to the universal ribosomal protein uS3 family. As to quaternary structure, part of the 30S ribosomal subunit. Forms a tight complex with proteins S10 and S14.

Functionally, binds the lower part of the 30S subunit head. Binds mRNA in the 70S ribosome, positioning it for translation. In Lacticaseibacillus paracasei (strain ATCC 334 / BCRC 17002 / CCUG 31169 / CIP 107868 / KCTC 3260 / NRRL B-441) (Lactobacillus paracasei), this protein is Small ribosomal subunit protein uS3.